Reading from the N-terminus, the 152-residue chain is Superoxide dismutase [Cu-Zn] (152 aa).

Cu cation-binding residues include His-45, His-47, and His-62. The cysteines at positions 56 and 145 are disulfide-linked. 4 residues coordinate Zn(2+): His-62, His-70, His-79, and Asp-82. His-119 provides a ligand contact to Cu cation.

This sequence belongs to the Cu-Zn superoxide dismutase family. As to quaternary structure, homodimer. It depends on Cu cation as a cofactor. Zn(2+) is required as a cofactor.

Its subcellular location is the cytoplasm. It catalyses the reaction 2 superoxide + 2 H(+) = H2O2 + O2. Functionally, destroys radicals which are normally produced within the cells and which are toxic to biological systems. The protein is Superoxide dismutase [Cu-Zn] (SODCC) of Zantedeschia aethiopica (White calla lily).